The primary structure comprises 357 residues: Arginine kinase (357 aa).

Position 2 is an N-acetylalanine (alanine 2). Positions lysine 9–lysine 91 constitute a Phosphagen kinase N-terminal domain. Residue glycine 64–tyrosine 68 participates in L-arginine binding. Residues phenylalanine 119 to methionine 356 enclose the Phosphagen kinase C-terminal domain. Residues serine 122–arginine 126 and histidine 185 each bind ATP. L-arginine is bound at residue glutamate 225. Position 229 (arginine 229) interacts with ATP. Residue cysteine 271 coordinates L-arginine. ATP is bound by residues arginine 280–histidine 284 and arginine 309–glutamate 314. L-arginine is bound at residue glutamate 314.

Belongs to the ATP:guanido phosphotransferase family.

The catalysed reaction is L-arginine + ATP = N(omega)-phospho-L-arginine + ADP + H(+). This chain is Arginine kinase, found in Carcinus maenas (Common shore crab).